We begin with the raw amino-acid sequence, 285 residues long: NADH-cytochrome b5 reductase 1 (285 aa).

A helical membrane pass occupies residues 7–23 (LATFSVLVLFYKLFTYS). The FAD-binding FR-type domain occupies 40–144 (TEFREFELVE…SGPRGFYEYV (105 aa)). Residues 124 to 139 (GDMKIGEKINISGPRG) and 150 to 182 (HLAMVAGGTGITPMFQIMKAIARDPSDKTRVTL) contribute to the FAD site.

The protein belongs to the flavoprotein pyridine nucleotide cytochrome reductase family. As to quaternary structure, monomer. Component of the 2-(3-amino-3-carboxypropyl)histidine synthase complex composed of DPH1, DPH2, DPH3 and a NADH-dependent reductase, predominantly CBR1. It depends on FAD as a cofactor.

Its subcellular location is the mitochondrion outer membrane. The catalysed reaction is 2 Fe(III)-[cytochrome b5] + NADH = 2 Fe(II)-[cytochrome b5] + NAD(+) + H(+). It catalyses the reaction 2 Fe(3+)-[Dph3] + NADH = 2 Fe(2+)-[Dph3] + NAD(+) + H(+). Its pathway is protein modification; peptidyl-diphthamide biosynthesis. NADH-dependent reductase for DPH3 and cytochrome b5. Required for the first step of diphthamide biosynthesis, a post-translational modification of histidine which occurs in elongation factor 2. DPH1 and DPH2 transfer a 3-amino-3-carboxypropyl (ACP) group from S-adenosyl-L-methionine (SAM) to a histidine residue, the reaction is assisted by a reduction system comprising DPH3 and a NADH-dependent reductase, predominantly CBR1. By reducing DPH3, also involved in the formation of the tRNA wobble base modification mcm5s 2U (5-methoxycarbonylmethyl-2-thiouridine), mediated by the elongator complex. The cytochrome b5/NADH cytochrome b5 reductase electron transfer system supports the catalytic activity of several sterol biosynthetic enzymes. This chain is NADH-cytochrome b5 reductase 1 (CBR1), found in Candida glabrata (strain ATCC 2001 / BCRC 20586 / JCM 3761 / NBRC 0622 / NRRL Y-65 / CBS 138) (Yeast).